The sequence spans 87 residues: Large ribosomal subunit protein bL31B (87 aa).

It belongs to the bacterial ribosomal protein bL31 family. Type B subfamily. As to quaternary structure, part of the 50S ribosomal subunit.

The polypeptide is Large ribosomal subunit protein bL31B (Burkholderia multivorans (strain ATCC 17616 / 249)).